A 396-amino-acid polypeptide reads, in one-letter code: Tryptophan synthase beta chain (396 aa).

Position 88 is an N6-(pyridoxal phosphate)lysine (K88).

It belongs to the TrpB family. Tetramer of two alpha and two beta chains. Requires pyridoxal 5'-phosphate as cofactor.

It catalyses the reaction (1S,2R)-1-C-(indol-3-yl)glycerol 3-phosphate + L-serine = D-glyceraldehyde 3-phosphate + L-tryptophan + H2O. Its pathway is amino-acid biosynthesis; L-tryptophan biosynthesis; L-tryptophan from chorismate: step 5/5. Functionally, the beta subunit is responsible for the synthesis of L-tryptophan from indole and L-serine. The chain is Tryptophan synthase beta chain from Shewanella sp. (strain W3-18-1).